Consider the following 627-residue polypeptide: 1-deoxy-D-xylulose-5-phosphate synthase (627 aa).

Thiamine diphosphate contacts are provided by residues H80 and 121 to 123 (GHS). Residue D152 participates in Mg(2+) binding. Residues 153–154 (GA), N181, Y288, and E370 each bind thiamine diphosphate. A Mg(2+)-binding site is contributed by N181.

Belongs to the transketolase family. DXPS subfamily. As to quaternary structure, homodimer. The cofactor is Mg(2+). Thiamine diphosphate serves as cofactor.

The catalysed reaction is D-glyceraldehyde 3-phosphate + pyruvate + H(+) = 1-deoxy-D-xylulose 5-phosphate + CO2. Its pathway is metabolic intermediate biosynthesis; 1-deoxy-D-xylulose 5-phosphate biosynthesis; 1-deoxy-D-xylulose 5-phosphate from D-glyceraldehyde 3-phosphate and pyruvate: step 1/1. In terms of biological role, catalyzes the acyloin condensation reaction between C atoms 2 and 3 of pyruvate and glyceraldehyde 3-phosphate to yield 1-deoxy-D-xylulose-5-phosphate (DXP). The sequence is that of 1-deoxy-D-xylulose-5-phosphate synthase from Aliivibrio salmonicida (strain LFI1238) (Vibrio salmonicida (strain LFI1238)).